The sequence spans 304 residues: DCN1-like protein 3 (304 aa).

Disordered regions lie at residues 1 to 86 and 284 to 304; these read MGQC…AEES and EGEG…EEQT. The N-myristoyl glycine moiety is linked to residue Gly2. One can recognise a DCUN1 domain in the interval 86–278; the sequence is SSLQRLEELF…LFDTFVEWEM (193 aa).

Part of a complex containing DCUN1D3, CUL3 and RBX1. Interacts (via the DCUN1 domain) with the unneddylated cullins: interacts with CUL1, CUL2, CUL3, CUL4A, CUL4B and CUL5; these interactions promote the cullin neddylation and the identity of the cullin dictates the affinity of the interaction. Interacts preferentially with CUL3; this interaction triggers the relocalization of CUL3 to the cell membrane where CUL3 is neddylated. Interacts (via DCUN1 domain) with RBX1. May also interact with regulators or subunits of cullin-RING ligases such as RNF7, ELOB and DDB1; these interactions are bridged by cullins. Interacts (via DCUN1 domain) with CAND1; this interaction is bridged by cullins and strongly inhibits cullin neddylation. These CAND-cullin-DCNL complexes can only be neddylated in the presence of a substrate adapter. Interacts (via DCUN1 domain) with the N-terminally acetylated form of UBE2M and UBE2F. As to expression, tends to be down-regulated in different type of cancers, including lung neuroendocrine carcinoma, thyroid Huerthle cell carcinoma and lung squamous cell carcinoma. Mostly expressed in testis and brain. Highly expressed in liver, bladder and renal normal tissue than their tumor tissue counterparts. Palmitoylation stabilizes DCUN1D3 at the cell membrane.

It localises to the cell membrane. The protein localises to the cytoplasm. The protein resides in the nucleus. Its subcellular location is the perinuclear region. Functionally, contributes to the neddylation of all cullins by transferring NEDD8 from N-terminally acetylated NEDD8-conjugating E2s enzyme to different cullin C-terminal domain-RBX complexes and may play a role in the cell cycle progression by regulating the SCF ubiquitin E3 ligase complex, after UV damage. At the cell membrane, can promote and as well inhibit cullins neddylation. This is DCN1-like protein 3 from Homo sapiens (Human).